A 691-amino-acid polypeptide reads, in one-letter code: Probable serine/threonine-protein kinase pXi (691 aa).

The region spanning 18–263 is the Protein kinase domain; sequence YEIGSQIGNG…IDQTLKHPWI (246 aa). ATP-binding positions include 24 to 32 and lysine 47; that span reads IGNGKFAQV. Aspartate 137 functions as the Proton acceptor in the catalytic mechanism. Disordered regions lie at residues 314 to 350, 420 to 447, 510 to 536, and 600 to 620; these read TPIKSNDENNNNNNNNNNNNNNNEILDKKSNENENEN, ENDSSSSETYSSSSPIENGGGGGDKFTS, QHNNNINNNNNNINNGGSTSINNGNGT, and GGSGCSSSSDESTGGSFKKDK. The segment covering 322–336 has biased composition (low complexity); sequence NNNNNNNNNNNNNNN. A compositionally biased stretch (basic and acidic residues) spans 338–350; that stretch reads ILDKKSNENENEN. Low complexity-rich tracts occupy residues 423–433, 512–536, and 600–615; these read SSSSETYSSSS, NNNINNNNNNINNGGSTSINNGNGT, and GGSGCSSSSDESTGGS. Residues 642–691 adopt a coiled-coil conformation; the sequence is PKETMDKLASVLSNYKQKNQEKSLKVKYEKQKDKYKKLKSQLKKDKSLLK.

This sequence belongs to the protein kinase superfamily. CAMK Ser/Thr protein kinase family.

It catalyses the reaction L-seryl-[protein] + ATP = O-phospho-L-seryl-[protein] + ADP + H(+). It carries out the reaction L-threonyl-[protein] + ATP = O-phospho-L-threonyl-[protein] + ADP + H(+). This is Probable serine/threonine-protein kinase pXi (pXi) from Dictyostelium discoideum (Social amoeba).